Consider the following 337-residue polypeptide: Phenylalanine--tRNA ligase alpha subunit (337 aa).

Mg(2+) is bound at residue glutamate 258.

Belongs to the class-II aminoacyl-tRNA synthetase family. Phe-tRNA synthetase alpha subunit type 1 subfamily. Tetramer of two alpha and two beta subunits. It depends on Mg(2+) as a cofactor.

The protein localises to the cytoplasm. The enzyme catalyses tRNA(Phe) + L-phenylalanine + ATP = L-phenylalanyl-tRNA(Phe) + AMP + diphosphate + H(+). This Paraburkholderia phytofirmans (strain DSM 17436 / LMG 22146 / PsJN) (Burkholderia phytofirmans) protein is Phenylalanine--tRNA ligase alpha subunit.